Reading from the N-terminus, the 318-residue chain is Ribose-phosphate pyrophosphokinase 2 (318 aa).

Mg(2+) contacts are provided by aspartate 132, histidine 134, histidine 143, and aspartate 147.

It belongs to the ribose-phosphate pyrophosphokinase family.

It is found in the cytoplasm. The catalysed reaction is D-ribose 5-phosphate + ATP = 5-phospho-alpha-D-ribose 1-diphosphate + AMP + H(+). It functions in the pathway metabolic intermediate biosynthesis; 5-phospho-alpha-D-ribose 1-diphosphate biosynthesis; 5-phospho-alpha-D-ribose 1-diphosphate from D-ribose 5-phosphate (route I): step 1/1. 5-phosphoribose 1-diphosphate synthase involved in nucleotide, histidine, and tryptophan biosynthesis. Active in heteromultimeric complexes with other 5-phosphoribose 1-diphosphate synthases (PRS2, PRS3, PRS4 and PRS5). The sequence is that of Ribose-phosphate pyrophosphokinase 2 (PRS2) from Saccharomyces cerevisiae (strain ATCC 204508 / S288c) (Baker's yeast).